We begin with the raw amino-acid sequence, 239 residues long: Tetraspanin-9 (239 aa).

Residues 1-13 (MARGCLCCLKYMM) lie on the Cytoplasmic side of the membrane. Residues 14–34 (FLFNLIFWLCGCGLLGVGIWL) form a helical membrane-spanning segment. The Extracellular portion of the chain corresponds to 35 to 55 (SVSQGNFATFSPSFPSLSAAN). A helical membrane pass occupies residues 56–76 (LVIVIGTVVMVTGFLGCLGAI). Residues 77 to 85 (KENKCLLLS) lie on the Cytoplasmic side of the membrane. Residues 86-106 (FFIILLIILLTELILLILFFV) form a helical membrane-spanning segment. Residues 107-203 (YMDKVNENAK…VKMWFDDNKH (97 aa)) lie on the Extracellular side of the membrane. Residue asparagine 180 is glycosylated (N-linked (GlcNAc...) asparagine). Residues 204 to 224 (VLGTIGMCILIIQILGMAFSM) traverse the membrane as a helical segment. Topologically, residues 225–239 (TLFQQIHRTGKKYDA) are cytoplasmic.

The protein belongs to the tetraspanin (TM4SF) family.

It localises to the membrane. The sequence is that of Tetraspanin-9 (tspan9) from Xenopus laevis (African clawed frog).